Reading from the N-terminus, the 419-residue chain is Capsule polysaccharide modification protein LipB (419 aa).

It is found in the cell inner membrane. Its function is as follows. Involved in the phospholipid modification of the capsular polysaccharide, a strong requirement for its translocation to the cell surface. In Neisseria meningitidis serogroup B (strain ATCC BAA-335 / MC58), this protein is Capsule polysaccharide modification protein LipB (lipB).